Consider the following 550-residue polypeptide: Transcriptional repressor RHIT (550 aa).

3 disordered regions span residues 1-67 (MSAD…ETRA), 174-200 (VQGK…VVEV), and 216-296 (KSFK…EGLA). 3 stretches are compositionally biased toward basic and acidic residues: residues 11-22 (AQDKERARETPG), 45-58 (ESPH…EPHP), and 187-200 (LGHE…VVEV). The region spanning 124 to 193 (VTFEDMALYL…SRQLGHEEEE (70 aa)) is the KRAB domain. Lys216 is covalently cross-linked (Glycyl lysine isopeptide (Lys-Gly) (interchain with G-Cter in SUMO2)). Basic and acidic residues predominate over residues 267–281 (DLPKTQEGHFPEQPR). Ser290 is modified (phosphoserine). 8 C2H2-type zinc fingers span residues 306–328 (YKCE…RRTH), 334–356 (YACT…QIIH), 362–384 (YTCP…QRIH), 390–412 (YVCD…QGTH), 418–440 (HKCP…QRTH), 446–468 (YPCP…NRTH), 474–496 (YHCL…QRTH), and 502–524 (YSCP…EKIH).

This sequence belongs to the krueppel C2H2-type zinc-finger protein family.

The protein resides in the nucleus. Functionally, transcriptional repressor involved in regulating MPV17L expression. By regulating MPV17L expression, contributes to the regulation of genes involved in H(2)O(2) metabolism and the mitochondrial apoptotic cascade. The polypeptide is Transcriptional repressor RHIT (ZNF205) (Bos taurus (Bovine)).